The chain runs to 177 residues: Voltage-dependent L-type calcium channel subunit alpha-1C (177 aa).

Residues 27-45 form a helical membrane-spanning segment; that stretch reads ITFFRLFRVMRLVKLLSRG. The helical transmembrane segment at 64–84 threads the bilayer; that stretch reads YVALLIVMLFFIYAVIGMQVF. N-linked (GlcNAc...) asparagine glycosylation is present at Asn-90. The pore-forming intramembrane region spans 107–125; sequence AVLLLFRCATGEAWQEIML. Residues 116-119 carry the Selectivity filter of repeat IV motif; the sequence is TGEA. Cysteines 133 and 149 form a disulfide. N-linked (GlcNAc...) asparagine glycosylation occurs at Asn-141. A helical membrane pass occupies residues 154–177; it reads AVFYFISFYMLCAFLIIDLFVAVI.

Belongs to the calcium channel alpha-1 subunit (TC 1.A.1.11) family. CACNA1C subfamily. In terms of assembly, component of a calcium channel complex consisting of a pore-forming alpha subunit (CACNA1C) and ancillary beta, gamma and delta subunits. The channel complex contains alpha, beta, gamma and delta subunits in a 1:1:1:1 ratio, i.e. it contains only one of each type of subunit. CACNA1C channel activity is modulated by ancillary subunits, such as CACNB2, CACNB3, CACNA2D1 and CACNA2D4. Post-translationally, phosphorylation by PKA activates the channel.

The protein localises to the cell membrane. It is found in the perikaryon. Its subcellular location is the postsynaptic density membrane. The protein resides in the cell projection. It localises to the dendrite. The protein localises to the sarcolemma. It is found in the T-tubule. The catalysed reaction is Ca(2+)(in) = Ca(2+)(out). Its activity is regulated as follows. Inhibited by dihydropyridines (DHP), such as isradipine. Channel activity is regulated by Ca(2+) and calmodulin. Pore-forming, alpha-1C subunit of the voltage-gated calcium channel that gives rise to L-type calcium currents. Mediates influx of calcium ions into the cytoplasm, and thereby triggers calcium release from the sarcoplasm. Plays an important role in excitation-contraction coupling in the heart. Required for normal heart development and normal regulation of heart rhythm. Required for normal contraction of smooth muscle cells in blood vessels and in the intestine. Essential for normal blood pressure regulation via its role in the contraction of arterial smooth muscle cells. Long-lasting (L-type) calcium channels belong to the 'high-voltage activated' (HVA) group. The polypeptide is Voltage-dependent L-type calcium channel subunit alpha-1C (CACNA1C) (Gallus gallus (Chicken)).